A 229-amino-acid polypeptide reads, in one-letter code: Ras-like protein rasV (229 aa).

GTP is bound at residue 40–47; the sequence is GDGGVGKT. An Effector region motif is present at residues 62–70; that stretch reads YDPTIEDSY. GTP is bound by residues 87–91 and 146–149; these read DTAGQ and NKSD. C226 carries the post-translational modification Cysteine methyl ester. C226 carries S-geranylgeranyl cysteine lipidation. A propeptide spans 227 to 229 (removed in mature form); it reads KVM.

The protein belongs to the small GTPase superfamily. Ras family.

The protein resides in the cell membrane. It catalyses the reaction GTP + H2O = GDP + phosphate + H(+). Its function is as follows. Ras proteins bind GDP/GTP and possess intrinsic GTPase activity. The chain is Ras-like protein rasV (rasV) from Dictyostelium discoideum (Social amoeba).